We begin with the raw amino-acid sequence, 158 residues long: Transcription elongation factor GreA (158 aa).

It belongs to the GreA/GreB family.

Its function is as follows. Necessary for efficient RNA polymerase transcription elongation past template-encoded arresting sites. The arresting sites in DNA have the property of trapping a certain fraction of elongating RNA polymerases that pass through, resulting in locked ternary complexes. Cleavage of the nascent transcript by cleavage factors such as GreA or GreB allows the resumption of elongation from the new 3'terminus. GreA releases sequences of 2 to 3 nucleotides. The polypeptide is Transcription elongation factor GreA (Zymomonas mobilis subsp. mobilis (strain ATCC 31821 / ZM4 / CP4)).